Consider the following 253-residue polypeptide: 5-oxoprolinase subunit A (253 aa).

This sequence belongs to the LamB/PxpA family. In terms of assembly, forms a complex composed of PxpA, PxpB and PxpC.

The enzyme catalyses 5-oxo-L-proline + ATP + 2 H2O = L-glutamate + ADP + phosphate + H(+). Functionally, catalyzes the cleavage of 5-oxoproline to form L-glutamate coupled to the hydrolysis of ATP to ADP and inorganic phosphate. In Bacillus cereus (strain ZK / E33L), this protein is 5-oxoprolinase subunit A.